Reading from the N-terminus, the 459-residue chain is MSDWKEYSLGDISRNISRRFDFNAYPNVVFINTGDVLNNKFLHCEISNVKDLPGQAKKAIKKGDILYSEIRPGNGRYLFVDNDLDNYVVSTKFMVIEPNANIVLPEFLFLLLISNETTEYFKMIAESRSGTFPQITFDSVSSLSLNIPDKETQQKILDIITPLDDKIELNTQINQTLEQIAQALFKSWFVDFDPVRAKAQALSDGMSLEQAELAAMQAISGKTPEELTALSQTQPDRYAELAETAKAFPCEMVEVDGVEVDGVEVPRGWEMKALSDLGQIICGKTPSKSNKEFYGDDVPFIKIPDMHNQVFITQTTDNLSVVGANYQSKKYIPAKSICVSCIATVGLVSMTSKPSHTNQQINSIIPDDEQSCEFLYLSLKQPSMTKYLKDLASGGTATLNLNTSTFSKIEIITPSKEIIYIFQKKVVSIFEKTLSNSIENKRLTEIRDLLLPRLLNGEI.

The protein belongs to the type-I restriction system S methylase family. The type I restriction/modification system is composed of three polypeptides R, M and S; the restriction enzyme has stoichiometry R(2)M(2)S(1) while the methyltransferase is M(2)S(1).

The specificity (S) subunit of a type I restriction enzyme; this subunit dictates DNA sequence specificity. The M and S subunits together form a methyltransferase (MTase) that methylates adenosines in the sequence 5'-RAACN(5)TAG-3'. Methylation protects against cleavage by HindI. In the presence of the R subunit the complex can also act as an endonuclease, binding to the same target sequence but cutting the DNA some distance from this site. Whether the DNA is cut or modified depends on the methylation state of the target sequence. When the target site is unmodified, the DNA is cut. When the target site is hemimethylated, the complex acts as a maintenance MTase modifying the DNA so that both strands become methylated. After locating a non-methylated recognition site, the enzyme complex serves as a molecular motor that translocates DNA in an ATP-dependent manner until a collision occurs that triggers cleavage. The protein is Type I restriction enzyme HindI specificity subunit of Haemophilus influenzae (strain ATCC 51907 / DSM 11121 / KW20 / Rd).